Here is a 704-residue protein sequence, read N- to C-terminus: Non-sulfated chondroitin lyase E66 (704 aa).

The signal sequence occupies residues 1-23; that stretch reads MSIVLIIVIVVIFLICFLYLSNS. Catalysis depends on proton acceptor residues asparagine 236 and histidine 291. The active-site Proton donor is tyrosine 299.

Belongs to the baculoviridae E66 family.

The protein localises to the virion membrane. It localises to the host nucleus. Its subcellular location is the host cytoplasm. Its function is as follows. Component of the polyhedra envelope. Plays an essential role in oral infectivity. May digest, with its chondroitin lyase activity, the chondroitin sulfate barrier of the peritrophic matrix of the host midgut to facilitate viral infection in the epithelial cells. This is Non-sulfated chondroitin lyase E66 (P79) from Lepidoptera (butterflies and moths).